The primary structure comprises 267 residues: Indole-3-glycerol phosphate synthase (267 aa).

It belongs to the TrpC family.

The catalysed reaction is 1-(2-carboxyphenylamino)-1-deoxy-D-ribulose 5-phosphate + H(+) = (1S,2R)-1-C-(indol-3-yl)glycerol 3-phosphate + CO2 + H2O. Its pathway is amino-acid biosynthesis; L-tryptophan biosynthesis; L-tryptophan from chorismate: step 4/5. The chain is Indole-3-glycerol phosphate synthase from Polynucleobacter asymbioticus (strain DSM 18221 / CIP 109841 / QLW-P1DMWA-1) (Polynucleobacter necessarius subsp. asymbioticus).